Here is a 143-residue protein sequence, read N- to C-terminus: 18 kDa heat shock protein (143 aa).

The sHSP domain occupies 23–135 (TWSRPTAMPM…KRRRVKVGQG (113 aa)).

Belongs to the small heat shock protein (HSP20) family.

This chain is 18 kDa heat shock protein (hsp18), found in Streptomyces albus G.